Here is a 464-residue protein sequence, read N- to C-terminus: Probable glycosyltransferase Saci_1499 (464 aa).

6 consecutive transmembrane segments (helical) span residues 6-26 (IFLN…QIIL), 300-320 (LIIY…STLL), 337-357 (ALLF…SLAL), 373-393 (LTAF…KGLL), 416-436 (IIAI…LYIY), and 439-459 (YYVT…TMLL).

This sequence belongs to the glycosyltransferase 2 family.

The protein localises to the cell membrane. Functionally, probably part of a 4-gene DNA damage response locus in which the upstream ups system, in combination with this downstream locus, functions in homologous recombination to rescue Sulfolobales from DNA-damaging threats. This is Probable glycosyltransferase Saci_1499 from Sulfolobus acidocaldarius (strain ATCC 33909 / DSM 639 / JCM 8929 / NBRC 15157 / NCIMB 11770).